A 225-amino-acid chain; its full sequence is uncharacterized protein (225 aa).

N-linked (GlcNAc...) asparagine; by host glycosylation is found at Asn48, Asn58, Asn105, and Asn108. The chain crosses the membrane as a helical span at residues 156–178 (LWGYLKQPLVMVGIAAVVGYLIY).

The protein belongs to the ascovirus HvAv ORF58 family.

Its subcellular location is the membrane. This is an uncharacterized protein from Heliothis virescens ascovirus 3e (HvAV-3e).